The chain runs to 138 residues: Gamma-glutamylaminecyclotransferase (138 aa).

Residue Glu-63 is the Proton acceptor of the active site.

It belongs to the gamma-glutamylcyclotransferase family.

It catalyses the reaction epsilon-(gamma-L-glutamyl)-L-lysine = 5-oxo-L-proline + L-lysine. In terms of biological role, may contribute to degradation of proteins cross-linked by transglutaminases by degrading the cross-link between a lysine and a glutamic acid residue. Catalyzes the formation of 5-oxo-L-proline from L-gamma-glutamyl-L-epsilon-lysine. This is Gamma-glutamylaminecyclotransferase (ggact) from Xenopus laevis (African clawed frog).